A 239-amino-acid chain; its full sequence is Homeobox protein Nkx-2.8 (239 aa).

Polar residues predominate over residues 1–11 (MATSGRLSFTV). The segment at 1-87 (MATSGRLSFT…GSDAEKRKKR (87 aa)) is disordered. The segment covering 21-32 (DAQHLPRREPEP) has biased composition (basic and acidic residues). Residues 62–79 (SPPDSSQRPSARPASPGS) are compositionally biased toward low complexity. The homeobox DNA-binding region spans 84–143 (RKKRRVLFSKAQTLELERRFRQQRYLSAPEREQLASLLRLTPTQVKIWFQNHRYKLKRAR).

It belongs to the NK-2 homeobox family.

Its subcellular location is the nucleus. The polypeptide is Homeobox protein Nkx-2.8 (NKX2-8) (Homo sapiens (Human)).